The sequence spans 318 residues: Ribosomal RNA small subunit methyltransferase H (318 aa).

Residues 34 to 36 (GGY), aspartate 52, phenylalanine 79, aspartate 100, and glutamine 107 each bind S-adenosyl-L-methionine. The segment at 286–318 (GPAPDEARANPRARSAKLRAAARTAAPAWETVS) is disordered. The span at 303 to 318 (LRAAARTAAPAWETVS) shows a compositional bias: low complexity.

The protein belongs to the methyltransferase superfamily. RsmH family.

The protein localises to the cytoplasm. It carries out the reaction cytidine(1402) in 16S rRNA + S-adenosyl-L-methionine = N(4)-methylcytidine(1402) in 16S rRNA + S-adenosyl-L-homocysteine + H(+). Its function is as follows. Specifically methylates the N4 position of cytidine in position 1402 (C1402) of 16S rRNA. The polypeptide is Ribosomal RNA small subunit methyltransferase H (Paramagnetospirillum magneticum (strain ATCC 700264 / AMB-1) (Magnetospirillum magneticum)).